The sequence spans 100 residues: Urease subunit gamma (100 aa).

It belongs to the urease gamma subunit family. Heterotrimer of UreA (gamma), UreB (beta) and UreC (alpha) subunits. Three heterotrimers associate to form the active enzyme.

It localises to the cytoplasm. It catalyses the reaction urea + 2 H2O + H(+) = hydrogencarbonate + 2 NH4(+). The protein operates within nitrogen metabolism; urea degradation; CO(2) and NH(3) from urea (urease route): step 1/1. In Haemophilus influenzae (strain PittGG), this protein is Urease subunit gamma.